The sequence spans 394 residues: Major outer membrane porin, serovar B (394 aa).

Residues 1–22 form the signal peptide; it reads MKKLLKSVLVFAALSSASSLQA.

This sequence belongs to the chlamydial porin (CP) (TC 1.B.2) family. In terms of assembly, part of a disulfide cross-linked outer membrane complex (COMC) composed of the major outer membrane porin (MOMP), the small cysteine-rich protein (OmcA) and the large cysteine-rich periplasmic protein (OmcB).

Its subcellular location is the cell outer membrane. Functionally, in elementary bodies (EBs, the infectious stage, which is able to survive outside the host cell) provides the structural integrity of the outer envelope through disulfide cross-links with the small cysteine-rich protein and the large cysteine-rich periplasmic protein. It has been described in publications as the Sarkosyl-insoluble COMC (Chlamydia outer membrane complex), and serves as the functional equivalent of peptidoglycan. Its function is as follows. Permits diffusion of specific solutes through the outer membrane. The protein is Major outer membrane porin, serovar B (ompA) of Chlamydia trachomatis.